A 404-amino-acid polypeptide reads, in one-letter code: L-cysteine:1D-myo-inositol 2-amino-2-deoxy-alpha-D-glucopyranoside ligase (404 aa).

Cys-35 is a Zn(2+) binding site. Residues 35 to 38, Thr-50, and 73 to 75 contribute to the L-cysteinyl-5'-AMP site; these read CGIT and NVT. Residues 37–47 carry the 'HIGH' region motif; sequence ITPYDATHLGH. Positions 178-183 match the 'ERGGDP' region motif; the sequence is ERGGDP. Trp-219 contributes to the L-cysteinyl-5'-AMP binding site. Cys-223 serves as a coordination point for Zn(2+). 241–243 contacts L-cysteinyl-5'-AMP; the sequence is GND. His-248 contributes to the Zn(2+) binding site. Position 275 (Ile-275) interacts with L-cysteinyl-5'-AMP. The 'KMSKS' region signature appears at 281-285; sequence KMSKS.

Belongs to the class-I aminoacyl-tRNA synthetase family. MshC subfamily. In terms of assembly, monomer. It depends on Zn(2+) as a cofactor.

The catalysed reaction is 1D-myo-inositol 2-amino-2-deoxy-alpha-D-glucopyranoside + L-cysteine + ATP = 1D-myo-inositol 2-(L-cysteinylamino)-2-deoxy-alpha-D-glucopyranoside + AMP + diphosphate + H(+). Its function is as follows. Catalyzes the ATP-dependent condensation of GlcN-Ins and L-cysteine to form L-Cys-GlcN-Ins. The sequence is that of L-cysteine:1D-myo-inositol 2-amino-2-deoxy-alpha-D-glucopyranoside ligase from Salinispora tropica (strain ATCC BAA-916 / DSM 44818 / JCM 13857 / NBRC 105044 / CNB-440).